A 177-amino-acid chain; its full sequence is Large ribosomal subunit protein uL10 (177 aa).

Belongs to the universal ribosomal protein uL10 family. As to quaternary structure, part of the ribosomal stalk of the 50S ribosomal subunit. The N-terminus interacts with L11 and the large rRNA to form the base of the stalk. The C-terminus forms an elongated spine to which L12 dimers bind in a sequential fashion forming a multimeric L10(L12)X complex.

In terms of biological role, forms part of the ribosomal stalk, playing a central role in the interaction of the ribosome with GTP-bound translation factors. The protein is Large ribosomal subunit protein uL10 of Mycobacterium leprae (strain Br4923).